Here is a 147-residue protein sequence, read N- to C-terminus: Hemoglobin subunit beta (147 aa).

An N-acetylvaline modification is found at V2. Residues H3–H147 enclose the Globin domain. Phosphothreonine is present on T13. S45 is subject to Phosphoserine. Residue K60 is modified to N6-acetyllysine. H64 is a binding site for heme b. K83 is modified (N6-acetyllysine). H93 is a heme b binding site. C94 is modified (S-nitrosocysteine). An N6-acetyllysine modification is found at K145.

Belongs to the globin family. As to quaternary structure, heterotetramer of two alpha chains and two beta chains. In terms of tissue distribution, red blood cells.

Involved in oxygen transport from the lung to the various peripheral tissues. In Scalopus aquaticus (Eastern mole), this protein is Hemoglobin subunit beta (HBB).